Consider the following 312-residue polypeptide: Putative B3 domain-containing protein Os10g0537100 (312 aa).

The TF-B3 DNA-binding region spans 35-153 (FEKVVTPSDV…RLFIDFRRRR (119 aa)). Disordered regions lie at residues 161 to 182 (FPPT…HPPL) and 286 to 312 (LLQL…DLGL). Positions 170–180 (HSHHHHQRHHP) are enriched in basic residues. Low complexity predominate over residues 286–301 (LLQLPSPSSSTSSSTA).

The protein localises to the nucleus. The polypeptide is Putative B3 domain-containing protein Os10g0537100 (Oryza sativa subsp. japonica (Rice)).